Here is a 127-residue protein sequence, read N- to C-terminus: MSKAAIQFFRGVNEPVVPDIRLTRSRDGRTGQATFRFEQPAAIAPETMGDITGMWMVDEEGEMVTREVNGKFVNGTASALEAVYSWKSEQDFERFMRFAQRYADANGLGYSQSQDSDQTEGADNQQA.

Positions Leu108–Ala127 are disordered. Residues Gly109 to Ala127 are compositionally biased toward polar residues.

This sequence belongs to the Psb28 family. Part of the photosystem II complex.

The protein localises to the cellular thylakoid membrane. In Synechococcus sp. (strain CC9605), this protein is Photosystem II reaction center Psb28 protein.